Reading from the N-terminus, the 407-residue chain is Ribonuclease Z (407 aa).

Residues 1-308 (MEITFLGTSS…QDFLHYAIPR (308 aa)) form a ribonuclease Z region. Residues His62, His64, Asp66, His67, His139, Asp210, and His268 each contribute to the Zn(2+) site. The active-site Proton acceptor is Asp66. The tract at residues 309–407 (DGQICAEMPP…VDWSALNVLF (99 aa)) is unknown.

This sequence belongs to the RNase Z family. In terms of assembly, homodimer. Zn(2+) serves as cofactor.

It carries out the reaction Endonucleolytic cleavage of RNA, removing extra 3' nucleotides from tRNA precursor, generating 3' termini of tRNAs. A 3'-hydroxy group is left at the tRNA terminus and a 5'-phosphoryl group is left at the trailer molecule.. Functionally, zinc phosphodiesterase, which displays some tRNA 3'-processing endonuclease activity. Probably involved in tRNA maturation, by removing a 3'-trailer from precursor tRNA. The protein is Ribonuclease Z (rnz) of Thermosynechococcus vestitus (strain NIES-2133 / IAM M-273 / BP-1).